A 388-amino-acid chain; its full sequence is Riboflavin biosynthesis protein RibBA (388 aa).

A DHBP synthase region spans residues 1 to 186 (MEELREAFEE…MDDVWREFVK (186 aa)). Residues 21-22 (RE), Asp26, 125-129 (RKGHT), and Glu149 each bind D-ribulose 5-phosphate. Residue Glu22 participates in Mg(2+) binding. His128 contacts Mg(2+). The interval 187-388 (RKLLMKKKAE…LEEIFREVNS (202 aa)) is GTP cyclohydrolase II. 235-239 (RIHSE) serves as a coordination point for GTP. The Zn(2+) site is built by Cys240, Cys251, and Cys253. GTP contacts are provided by residues Gln256, 277-279 (EGR), and Thr299. The active-site Proton acceptor; for GTP cyclohydrolase activity is the Asp311. Catalysis depends on Arg313, which acts as the Nucleophile; for GTP cyclohydrolase activity. Residues Thr334 and Lys339 each coordinate GTP.

The protein in the N-terminal section; belongs to the DHBP synthase family. This sequence in the C-terminal section; belongs to the GTP cyclohydrolase II family. Mg(2+) is required as a cofactor. Mn(2+) serves as cofactor. Requires Zn(2+) as cofactor.

It catalyses the reaction D-ribulose 5-phosphate = (2S)-2-hydroxy-3-oxobutyl phosphate + formate + H(+). The catalysed reaction is GTP + 4 H2O = 2,5-diamino-6-hydroxy-4-(5-phosphoribosylamino)-pyrimidine + formate + 2 phosphate + 3 H(+). It participates in cofactor biosynthesis; riboflavin biosynthesis; 2-hydroxy-3-oxobutyl phosphate from D-ribulose 5-phosphate: step 1/1. The protein operates within cofactor biosynthesis; riboflavin biosynthesis; 5-amino-6-(D-ribitylamino)uracil from GTP: step 1/4. Catalyzes the conversion of D-ribulose 5-phosphate to formate and 3,4-dihydroxy-2-butanone 4-phosphate. Its function is as follows. Catalyzes the conversion of GTP to 2,5-diamino-6-ribosylamino-4(3H)-pyrimidinone 5'-phosphate (DARP), formate and pyrophosphate. This is Riboflavin biosynthesis protein RibBA from Thermotoga maritima (strain ATCC 43589 / DSM 3109 / JCM 10099 / NBRC 100826 / MSB8).